The sequence spans 395 residues: Dihydroorotate dehydrogenase (quinone), mitochondrial (395 aa).

The transit peptide at 1 to 10 (MAWRQLKKRA) directs the protein to the mitochondrion; not cleaved. Residues 1–10 (MAWRQLKKRA) are Mitochondrial matrix-facing. The helical transmembrane segment at 11-30 (QDAMVILGGGGLLFASYLTA) threads the bilayer. The Mitochondrial intermembrane portion of the chain corresponds to 31 to 395 (TGDEHFYAEL…TDAIGADHRR (365 aa)). FMN-binding positions include 95–99 (AGFDK) and Ser119. Lys99 lines the substrate pocket. Substrate is bound at residue 144 to 148 (NRYGF). Residues Asn180 and Asn211 each contribute to the FMN site. 211–216 (NVSSPN) is a substrate binding site. Catalysis depends on Ser214, which acts as the Nucleophile. The FMN site is built by Lys254 and Thr282. Position 283-284 (283-284 (NS)) interacts with substrate. FMN is bound by residues Gly305, Gly334, and 355–356 (YT).

This sequence belongs to the dihydroorotate dehydrogenase family. Type 2 subfamily. In terms of assembly, monomer. It depends on FMN as a cofactor. In terms of processing, the uncleaved transit peptide is required for mitochondrial targeting and proper membrane integration.

It localises to the mitochondrion inner membrane. The enzyme catalyses (S)-dihydroorotate + a quinone = orotate + a quinol. It participates in pyrimidine metabolism; UMP biosynthesis via de novo pathway; orotate from (S)-dihydroorotate (quinone route): step 1/1. Functionally, catalyzes the conversion of dihydroorotate to orotate with quinone as electron acceptor. Required for UMP biosynthesis via de novo pathway. This Bos taurus (Bovine) protein is Dihydroorotate dehydrogenase (quinone), mitochondrial (DHODH).